A 434-amino-acid chain; its full sequence is N-acylneuraminate cytidylyltransferase (434 aa).

Methionine 1 is modified (N-acetylmethionine). The interval 1-42 (MDSVEKGAATSVSNPRGRPSRGRPPKLQRNSRGGQGRGVEKP) is disordered. A BC1 motif motif is present at residues 15 to 31 (PRGRPSRGRPPKLQRNS). Residues arginine 37 and arginine 52 each carry the omega-N-methylarginine modification. 6 residues coordinate substrate: arginine 52, asparagine 62, arginine 111, serine 120, serine 122, and glutamine 143. Positions 200-206 (KRPRRQD) match the BC2 motif motif. Residue arginine 201 is part of the active site. The BC3 motif signature appears at 269-276 (KEKLKEIK).

It belongs to the CMP-NeuNAc synthase family. As to quaternary structure, homotetramer; the active enzyme is formed by a dimer of dimers.

The protein localises to the nucleus. It carries out the reaction an N-acylneuraminate + CTP = a CMP-N-acyl-beta-neuraminate + diphosphate. The protein operates within amino-sugar metabolism; N-acetylneuraminate metabolism. Catalyzes the activation of N-acetylneuraminic acid (NeuNAc) to cytidine 5'-monophosphate N-acetylneuraminic acid (CMP-NeuNAc), a substrate required for the addition of sialic acid. Has some activity toward NeuNAc, N-glycolylneuraminic acid (Neu5Gc) or 2-keto-3-deoxy-D-glycero-D-galacto-nononic acid (KDN). In Bos taurus (Bovine), this protein is N-acylneuraminate cytidylyltransferase (CMAS).